We begin with the raw amino-acid sequence, 473 residues long: Photosystem II CP43 reaction center protein (473 aa).

The propeptide occupies 1 to 14; that stretch reads MKILYSLRRFYHVE. Thr-15 is modified (N-acetylthreonine). Position 15 is a phosphothreonine (Thr-15). A run of 5 helical transmembrane segments spans residues 69–93, 134–155, 178–200, 255–275, and 291–312; these read LFEV…PHLA, LLGP…KDRN, KALY…RKIT, KPFA…LSYS, and WFNN…ASQA. Glu-367 contributes to the [CaMn4O5] cluster binding site. Residues 447-471 traverse the membrane as a helical segment; it reads RARAAAAGFEKGIDRDLEPVLYMNP.

It belongs to the PsbB/PsbC family. PsbC subfamily. PSII is composed of 1 copy each of membrane proteins PsbA, PsbB, PsbC, PsbD, PsbE, PsbF, PsbH, PsbI, PsbJ, PsbK, PsbL, PsbM, PsbT, PsbX, PsbY, PsbZ, Psb30/Ycf12, at least 3 peripheral proteins of the oxygen-evolving complex and a large number of cofactors. It forms dimeric complexes. It depends on Binds multiple chlorophylls and provides some of the ligands for the Ca-4Mn-5O cluster of the oxygen-evolving complex. It may also provide a ligand for a Cl- that is required for oxygen evolution. PSII binds additional chlorophylls, carotenoids and specific lipids. as a cofactor. Post-translationally, phosphorylated on threonine residue(s); phosphorylation increases with increasing light levels.

It is found in the plastid. Its subcellular location is the chloroplast thylakoid membrane. One of the components of the core complex of photosystem II (PSII). It binds chlorophyll and helps catalyze the primary light-induced photochemical processes of PSII. PSII is a light-driven water:plastoquinone oxidoreductase, using light energy to abstract electrons from H(2)O, generating O(2) and a proton gradient subsequently used for ATP formation. This chain is Photosystem II CP43 reaction center protein, found in Secale cereale (Rye).